The primary structure comprises 125 residues: Histone H2A, orphon (125 aa).

A compositionally biased stretch (basic residues) spans 1–18 (MSGRGKGGKVKAKAKSRS). Residues 1–21 (MSGRGKGGKVKAKAKSRSSRA) form a disordered region. N-acetylserine is present on Ser-2. A Phosphoserine modification is found at Ser-2. Residue Lys-119 forms a Glycyl lysine isopeptide (Lys-Gly) (interchain with G-Cter in ubiquitin) linkage.

It belongs to the histone H2A family. The nucleosome is a histone octamer containing two molecules each of H2A, H2B, H3 and H4 assembled in one H3-H4 heterotetramer and two H2A-H2B heterodimers. The octamer wraps approximately 147 bp of DNA. Post-translationally, monoubiquitination of Lys-119 gives a specific tag for epigenetic transcriptional repression. Phosphorylation on Ser-2 is enhanced during mitosis. Phosphorylation on Ser-2 directly represses transcription.

It is found in the nucleus. It localises to the chromosome. Functionally, core component of nucleosome. Nucleosomes wrap and compact DNA into chromatin, limiting DNA accessibility to the cellular machineries which require DNA as a template. Histones thereby play a central role in transcription regulation, DNA repair, DNA replication and chromosomal stability. DNA accessibility is regulated via a complex set of post-translational modifications of histones, also called histone code, and nucleosome remodeling. The chain is Histone H2A, orphon from Chironomus thummi thummi (Midge).